We begin with the raw amino-acid sequence, 65 residues long: Large ribosomal subunit protein bL35 (65 aa).

Positions Met-1–Asp-51 are disordered. Over residues His-31 to Leu-44 the composition is skewed to basic residues.

Belongs to the bacterial ribosomal protein bL35 family.

This chain is Large ribosomal subunit protein bL35, found in Pediococcus pentosaceus (strain ATCC 25745 / CCUG 21536 / LMG 10740 / 183-1w).